Here is a 220-residue protein sequence, read N- to C-terminus: Heptaprenyl diphosphate synthase component 1 (220 aa).

Heterodimer of component I and II.

The enzyme catalyses 4 isopentenyl diphosphate + (2E,6E)-farnesyl diphosphate = all-trans-heptaprenyl diphosphate + 4 diphosphate. Its function is as follows. Supplies heptaprenyl diphosphate, the precursor for the side chain of the isoprenoid quinone menaquinone-7 (MQ-7). In Geobacillus stearothermophilus (Bacillus stearothermophilus), this protein is Heptaprenyl diphosphate synthase component 1 (hepS).